The chain runs to 396 residues: MSEFIAENRGADAITRPNWSAVFSVAFCVACLIIVEFLPVSLLTPMAQDLGISEGVAGQSVTVTAFVAMFASLFITQTIQATDRRNVVILFAVLLTLSCLLVSFANSFSLLLIGRACLGLALGGFWAMSASLTMRLVPPRTVPKALSVIFGAVSIALVIAAPLGSFLGELIGWRNVFNAAAVMGVLCIFWIIKSLPSLPGEPSHQKQNTFRLLQRPGVMAGMIAIFMSFAGQFAFFTYIRPVYMNLAGFSVDGLTLVLLSFGIASFIGTSLSSFILKRSVKLALAGAPLILAVSALVLTLWGSDKIVATGVAIIWGLTFALVPVGWSTWITRSLADQAEKAGSIQVAVIQLANTCGAAIGGYALDNIGLTSPLMFSGTLMLLTALLVTAKVKMKKS.

The Cytoplasmic segment spans residues 1–21; it reads MSEFIAENRGADAITRPNWSA. The chain crosses the membrane as a helical span at residues 22–42; the sequence is VFSVAFCVACLIIVEFLPVSL. Residues 43 to 54 lie on the Periplasmic side of the membrane; that stretch reads LTPMAQDLGISE. The helical transmembrane segment at 55–75 threads the bilayer; that stretch reads GVAGQSVTVTAFVAMFASLFI. Topologically, residues 76–85 are cytoplasmic; it reads TQTIQATDRR. Residues 86-106 form a helical membrane-spanning segment; it reads NVVILFAVLLTLSCLLVSFAN. Residue Ser-107 is a topological domain, periplasmic. Residues 108-128 form a helical membrane-spanning segment; it reads FSLLLIGRACLGLALGGFWAM. Residues 129–147 are Cytoplasmic-facing; sequence SASLTMRLVPPRTVPKALS. Residues 148–168 traverse the membrane as a helical segment; it reads VIFGAVSIALVIAAPLGSFLG. Residues 169 to 175 are Periplasmic-facing; that stretch reads ELIGWRN. The chain crosses the membrane as a helical span at residues 176–196; that stretch reads VFNAAAVMGVLCIFWIIKSLP. Residues 197-215 lie on the Cytoplasmic side of the membrane; the sequence is SLPGEPSHQKQNTFRLLQR. Residues 216–236 traverse the membrane as a helical segment; the sequence is PGVMAGMIAIFMSFAGQFAFF. Topologically, residues 237-255 are periplasmic; the sequence is TYIRPVYMNLAGFSVDGLT. Residues 256–276 form a helical membrane-spanning segment; the sequence is LVLLSFGIASFIGTSLSSFIL. At 277–281 the chain is on the cytoplasmic side; that stretch reads KRSVK. The helical transmembrane segment at 282-302 threads the bilayer; sequence LALAGAPLILAVSALVLTLWG. The Periplasmic segment spans residues 303–305; that stretch reads SDK. A helical transmembrane segment spans residues 306–326; the sequence is IVATGVAIIWGLTFALVPVGW. The Cytoplasmic portion of the chain corresponds to 327–343; sequence STWITRSLADQAEKAGS. The helical transmembrane segment at 344-364 threads the bilayer; the sequence is IQVAVIQLANTCGAAIGGYAL. Over 365–366 the chain is Periplasmic; the sequence is DN. Residues 367–387 form a helical membrane-spanning segment; it reads IGLTSPLMFSGTLMLLTALLV. Over 388–396 the chain is Cytoplasmic; the sequence is TAKVKMKKS.

The protein belongs to the major facilitator superfamily. DHA1 family. NepI (TC 2.A.1.2.26) subfamily.

The protein resides in the cell inner membrane. The catalysed reaction is inosine(in) + H(+)(out) = inosine(out) + H(+)(in). It carries out the reaction guanosine(in) + H(+)(out) = guanosine(out) + H(+)(in). Involved in the efflux of purine ribonucleosides, such as inosine and guanosine. The protein is Purine ribonucleoside efflux pump NepI of Shigella sonnei (strain Ss046).